Here is a 594-residue protein sequence, read N- to C-terminus: U3 small nucleolar RNA-associated protein 18 (594 aa).

Disordered stretches follow at residues 48-128 and 176-200; these read EQEM…WIDS and KWVD…SNNV. Composition is skewed to acidic residues over residues 49–72, 102–128, and 180–196; these read QEMD…DEAQ, TMDV…WIDS, and DESD…EEEG. Residues 101-190 form an interaction with UTP21 region; that stretch reads DTMDVDDEDD…ESDSELDDEE (90 aa). Phosphoserine occurs at positions 182 and 184. 5 WD repeats span residues 246 to 285, 290 to 334, 463 to 504, 513 to 554, and 560 to 593; these read PSHS…NHLV, LVGS…LTHS, GTTT…TSST, QLTT…VFSN, and TPLG…KLNH.

This sequence belongs to the WD repeat UTP18 family. As to quaternary structure, interacts with snoRNA U3. Interacts with MPP10, UTP21 and UTP25. Component of the ribosomal small subunit (SSU) processome composed of at least 40 protein subunits and snoRNA U3.

The protein localises to the nucleus. It is found in the nucleolus. In terms of biological role, involved in nucleolar processing of pre-18S ribosomal RNA and ribosome assembly. This is U3 small nucleolar RNA-associated protein 18 (UTP18) from Saccharomyces cerevisiae (strain ATCC 204508 / S288c) (Baker's yeast).